A 67-amino-acid chain; its full sequence is Peptide Hp1036 (67 aa).

Residues 1-23 form the signal peptide; sequence MKTQFAILLITLVLFQMFSQSDA. Residue phenylalanine 36 is modified to Phenylalanine amide. Positions 40-67 are excised as a propeptide; the sequence is GLNDLSDLDELFDGEISEADVDFLREIM.

It belongs to the non-disulfide-bridged peptide (NDBP) superfamily. Short antimicrobial peptide (group 4) family. Expressed by the venom gland.

The protein resides in the secreted. It localises to the target cell membrane. In terms of biological role, amphipathic peptide with antibacterial activities. Shows antiviral activities against the herpes simplex virus type-1. It potently inhibits the initial infection by provoking the rupture of viral envelop and the dissociation of proteins from the virions (EC(50) is 0.43 uM). It also effectively inhibits viral attachment (EC(50) is 2.87 uM), viral entry (EC(50) is 4.29 uM) and viral proliferation after infection (EC(50) is 7.86). Morever, it enters mammalian tested cells (Vero) and reduces the intracellular infectivity. The sequence is that of Peptide Hp1036 from Heterometrus petersii (Asian forest scorpion).